The chain runs to 258 residues: Snake venom serine protease (258 aa).

The N-terminal stretch at 1–18 (MVLIRVLANLLILQLSYA) is a signal peptide. The propeptide occupies 19 to 24 (QKSSEL). Positions 25–249 (VIGGDECNIN…YTEWIQSILA (225 aa)) constitute a Peptidase S1 domain. Disulfide bonds link Cys31–Cys163, Cys50–Cys66, Cys98–Cys256, Cys142–Cys210, Cys174–Cys189, and Cys200–Cys225. Residues His65 and Asp110 each act as charge relay system in the active site. A glycan (N-linked (GlcNAc...) asparagine) is linked at Asn154. Ser204 serves as the catalytic Charge relay system.

Belongs to the peptidase S1 family. Snake venom subfamily. In terms of assembly, monomer. As to expression, expressed by the venom gland.

The protein resides in the secreted. Its function is as follows. Snake venom serine protease that may act in the hemostasis system of the prey. The protein is Snake venom serine protease of Lachesis stenophrys (Central American bushmaster).